A 230-amino-acid polypeptide reads, in one-letter code: PKHD-type hydroxylase Xfasm12_1709 (230 aa).

One can recognise a Fe2OG dioxygenase domain in the interval 78-182 (RTLPPRFNRY…RIASFFWVQS (105 aa)). His96, Asp98, and His163 together coordinate Fe cation. Residue Arg173 participates in 2-oxoglutarate binding.

Fe(2+) serves as cofactor. Requires L-ascorbate as cofactor.

This chain is PKHD-type hydroxylase Xfasm12_1709, found in Xylella fastidiosa (strain M12).